Consider the following 142-residue polypeptide: Protein E6 (142 aa).

Zinc fingers lie at residues 27–63 (CIFCKFSVSIVDLASFHNKRLSVIWRDNTPFACCTKC) and 100–136 (CQHCYSFLDYLEKLYHLYNDVDFLLIRGTWRGVCRNC).

This sequence belongs to the papillomaviridae E6 protein family. As to quaternary structure, forms homodimers. Interacts with ubiquitin-protein ligase UBE3A/E6-AP; this interaction stimulates UBE3A ubiquitin activity. Interacts with host BAK1.

The protein resides in the host cytoplasm. Its subcellular location is the host nucleus. Its function is as follows. Plays a major role in the induction and maintenance of cellular transformation. E6 associates with host UBE3A/E6-AP ubiquitin-protein ligase and modulates its activity. Protects host keratinocytes from apoptosis by mediating the degradation of host BAK1. May also inhibit host immune response. The sequence is that of Protein E6 from Homo sapiens (Human).